Consider the following 586-residue polypeptide: ATP-dependent lipid A-core flippase (586 aa).

The next 4 membrane-spanning stretches (helical) occupy residues 25 to 45 (AYFI…AQLI), 74 to 94 (LWFV…GAYF), 163 to 183 (VAWF…AFIC), and 264 to 284 (VLHI…MILW). In terms of domain architecture, ABC transmembrane type-1 spans 28–317 (IISFIGFGVF…LTKINSIIQK (290 aa)). The region spanning 349 to 583 (VELKDVHFGY…SGVYANLYHS (235 aa)) is the ABC transporter domain. Position 382 to 389 (382 to 389 (GSSGSGKS)) interacts with ATP.

The protein belongs to the ABC transporter superfamily. Lipid exporter (TC 3.A.1.106) family. In terms of assembly, homodimer.

The protein localises to the cell inner membrane. It catalyses the reaction ATP + H2O + lipid A-core oligosaccharideSide 1 = ADP + phosphate + lipid A-core oligosaccharideSide 2.. Functionally, involved in lipopolysaccharide (LPS) biosynthesis. Translocates lipid A-core from the inner to the outer leaflet of the inner membrane. Transmembrane domains (TMD) form a pore in the inner membrane and the ATP-binding domain (NBD) is responsible for energy generation. This chain is ATP-dependent lipid A-core flippase, found in Saccharophagus degradans (strain 2-40 / ATCC 43961 / DSM 17024).